The sequence spans 397 residues: DnaJ homolog subfamily A member 4 (397 aa).

The J domain maps to 4-70 (ETQYYDILGV…RDIYDQGGEQ (67 aa)). S18 is subject to Phosphoserine. Residues 122-206 (GITKKLALQK…CSGAKVTREK (85 aa)) form a CR-type zinc finger. The Zn(2+) site is built by C135, C138, C151, C154, C178, C181, C194, and C197. CXXCXGXG motif repeat units follow at residues 135 to 142 (CEKCEGIG), 151 to 158 (CPLCKGRG), 178 to 185 (CIECKGQG), and 194 to 201 (CENCSGAK). The span at 366–380 (EFNPNEQSWRQHREA) shows a compositional bias: basic and acidic residues. Residues 366–397 (EFNPNEQSWRQHREAYEEDDEEPRAGVQCQTA) are disordered. Position 394 is a cysteine methyl ester (C394). C394 carries the S-farnesyl cysteine lipid modification. Residues 395–397 (QTA) constitute a propeptide, removed in mature form.

In terms of tissue distribution, specifically expressed in testis and heart.

The protein resides in the membrane. The chain is DnaJ homolog subfamily A member 4 (Dnaja4) from Mus musculus (Mouse).